The following is a 165-amino-acid chain: Phosphopantetheine adenylyltransferase (165 aa).

Threonine 10 is a binding site for substrate. Residues 10-11 (TF) and histidine 18 each bind ATP. Residues lysine 42, leucine 75, and arginine 89 each coordinate substrate. ATP contacts are provided by residues 90–92 (GVR), glutamate 100, and 125–131 (VSFISSS).

It belongs to the bacterial CoaD family. As to quaternary structure, homohexamer. Mg(2+) is required as a cofactor.

The protein resides in the cytoplasm. It catalyses the reaction (R)-4'-phosphopantetheine + ATP + H(+) = 3'-dephospho-CoA + diphosphate. The protein operates within cofactor biosynthesis; coenzyme A biosynthesis; CoA from (R)-pantothenate: step 4/5. Its function is as follows. Reversibly transfers an adenylyl group from ATP to 4'-phosphopantetheine, yielding dephospho-CoA (dPCoA) and pyrophosphate. The chain is Phosphopantetheine adenylyltransferase from Buchnera aphidicola subsp. Schizaphis graminum (strain Sg).